Here is a 473-residue protein sequence, read N- to C-terminus: Adenosylhomocysteinase (473 aa).

Substrate is bound by residues Thr-64, Asp-139, and Glu-199. Residue 200–202 participates in NAD(+) binding; sequence TTT. Substrate-binding residues include Lys-229 and Asp-233. Residues Asn-234, 263-268, Glu-286, Asn-321, 342-344, and Asn-387 each bind NAD(+); these read GYGDVG and IGH.

Belongs to the adenosylhomocysteinase family. NAD(+) serves as cofactor.

It localises to the cytoplasm. The enzyme catalyses S-adenosyl-L-homocysteine + H2O = L-homocysteine + adenosine. It participates in amino-acid biosynthesis; L-homocysteine biosynthesis; L-homocysteine from S-adenosyl-L-homocysteine: step 1/1. In terms of biological role, may play a key role in the regulation of the intracellular concentration of adenosylhomocysteine. The sequence is that of Adenosylhomocysteinase from Paraburkholderia xenovorans (strain LB400).